We begin with the raw amino-acid sequence, 310 residues long: Translocator protein BipD (310 aa).

Coiled-coil stretches lie at residues 127 to 171 and 250 to 299; these read DPIL…LQDY and DTAR…AIST.

This sequence belongs to the invasin protein D family.

The protein localises to the secreted. In terms of biological role, required for invasion of epithelial cells, as well as for survival within host cells, escape from endocytic vesicles and subsequent actin-tail formation. Probably regulates the secretion of effectors BipB and BipC and their final integration into the target cell membrane. This Burkholderia pseudomallei (strain 1106a) protein is Translocator protein BipD (bipD).